The following is a 184-amino-acid chain: Translation initiation factor IF-3 (184 aa).

This sequence belongs to the IF-3 family. Monomer.

The protein resides in the cytoplasm. In terms of biological role, IF-3 binds to the 30S ribosomal subunit and shifts the equilibrium between 70S ribosomes and their 50S and 30S subunits in favor of the free subunits, thus enhancing the availability of 30S subunits on which protein synthesis initiation begins. This is Translation initiation factor IF-3 from Mycoplasma genitalium (strain ATCC 33530 / DSM 19775 / NCTC 10195 / G37) (Mycoplasmoides genitalium).